Reading from the N-terminus, the 166-residue chain is UPF0134 protein MPN_138 (166 aa).

The protein belongs to the UPF0134 family.

In Mycoplasma pneumoniae (strain ATCC 29342 / M129 / Subtype 1) (Mycoplasmoides pneumoniae), this protein is UPF0134 protein MPN_138.